The following is a 393-amino-acid chain: Na(+)/H(+) antiporter NhaA 1 (393 aa).

The next 11 helical transmembrane spans lie at 23–43 (AGGVSLMVAAALALIVANSPF), 58–78 (LSLTDWINDALMAVFFLLVGL), 96–116 (MLPGIAAAGGVILPAIIFTAF), 126–146 (GWAVPSATDIAFALGVLSLLG), 155–175 (VFLATLAILDDLAAVVIIAIF), 178–198 (AEISMPYLGGAFAAAIVLFVM), 224–244 (GVHATVAGVVTALMIPLKAAP), 265–285 (VAFIIVPIFGFANAGISFAGL), 298–318 (IMLGLFIGKQLGVFGAAWLAI), 334–354 (LYGVAVLCGIGFTMSIFIGLL), and 367–387 (IGVLAGSGLSAICGYILLRLV).

Belongs to the NhaA Na(+)/H(+) (TC 2.A.33) antiporter family.

Its subcellular location is the cell inner membrane. It carries out the reaction Na(+)(in) + 2 H(+)(out) = Na(+)(out) + 2 H(+)(in). Its function is as follows. Na(+)/H(+) antiporter that extrudes sodium in exchange for external protons. The protein is Na(+)/H(+) antiporter NhaA 1 of Brucella anthropi (strain ATCC 49188 / DSM 6882 / CCUG 24695 / JCM 21032 / LMG 3331 / NBRC 15819 / NCTC 12168 / Alc 37) (Ochrobactrum anthropi).